A 231-amino-acid chain; its full sequence is 5'-methylthioadenosine/S-adenosylhomocysteine nucleosidase (231 aa).

Residue E12 is the Proton acceptor of the active site. Residues G78, V153, and 174–175 each bind substrate; that span reads ME. D198 functions as the Proton donor in the catalytic mechanism.

This sequence belongs to the PNP/UDP phosphorylase family. MtnN subfamily.

The enzyme catalyses S-adenosyl-L-homocysteine + H2O = S-(5-deoxy-D-ribos-5-yl)-L-homocysteine + adenine. It carries out the reaction S-methyl-5'-thioadenosine + H2O = 5-(methylsulfanyl)-D-ribose + adenine. The catalysed reaction is 5'-deoxyadenosine + H2O = 5-deoxy-D-ribose + adenine. It participates in amino-acid biosynthesis; L-methionine biosynthesis via salvage pathway; S-methyl-5-thio-alpha-D-ribose 1-phosphate from S-methyl-5'-thioadenosine (hydrolase route): step 1/2. In terms of biological role, catalyzes the irreversible cleavage of the glycosidic bond in both 5'-methylthioadenosine (MTA) and S-adenosylhomocysteine (SAH/AdoHcy) to adenine and the corresponding thioribose, 5'-methylthioribose and S-ribosylhomocysteine, respectively. Also cleaves 5'-deoxyadenosine, a toxic by-product of radical S-adenosylmethionine (SAM) enzymes, into 5-deoxyribose and adenine. The protein is 5'-methylthioadenosine/S-adenosylhomocysteine nucleosidase of Vibrio parahaemolyticus serotype O3:K6 (strain RIMD 2210633).